Reading from the N-terminus, the 241-residue chain is Probable transcriptional regulatory protein lin1570 (241 aa).

A compositionally biased stretch (polar residues) spans 1–14 (MAGHSKWNNIQGRK). The segment at 1–22 (MAGHSKWNNIQGRKNAQDSKRS) is disordered.

This sequence belongs to the TACO1 family.

Its subcellular location is the cytoplasm. This Listeria innocua serovar 6a (strain ATCC BAA-680 / CLIP 11262) protein is Probable transcriptional regulatory protein lin1570.